Consider the following 417-residue polypeptide: CinA-like protein (417 aa).

This sequence belongs to the CinA family.

The chain is CinA-like protein from Synechococcus sp. (strain RCC307).